Reading from the N-terminus, the 199-residue chain is Ribonuclease HII (199 aa).

The RNase H type-2 domain occupies 1–199; the sequence is MCVCGIDEAG…TYKNLVQGHI (199 aa). D7, E8, and D97 together coordinate a divalent metal cation.

The protein belongs to the RNase HII family. Requires Mn(2+) as cofactor. It depends on Mg(2+) as a cofactor.

The protein resides in the cytoplasm. It catalyses the reaction Endonucleolytic cleavage to 5'-phosphomonoester.. Its function is as follows. Endonuclease that specifically degrades the RNA of RNA-DNA hybrids. In Picrophilus torridus (strain ATCC 700027 / DSM 9790 / JCM 10055 / NBRC 100828 / KAW 2/3), this protein is Ribonuclease HII.